A 466-amino-acid chain; its full sequence is tRNA modification GTPase MnmE (466 aa).

(6S)-5-formyl-5,6,7,8-tetrahydrofolate is bound by residues R24, E85, and K128. Positions 224–384 (GLNIVLAGQP…LRTELLHLVG (161 aa)) constitute a TrmE-type G domain. N234 provides a ligand contact to K(+). Residues 234 to 239 (NVGKSS), 253 to 259 (TPIAGTT), and 278 to 281 (DTAG) contribute to the GTP site. Mg(2+) is bound at residue S238. 3 residues coordinate K(+): T253, I255, and T258. Mg(2+) is bound at residue T259. K466 contacts (6S)-5-formyl-5,6,7,8-tetrahydrofolate.

This sequence belongs to the TRAFAC class TrmE-Era-EngA-EngB-Septin-like GTPase superfamily. TrmE GTPase family. In terms of assembly, homodimer. Heterotetramer of two MnmE and two MnmG subunits. The cofactor is K(+).

It is found in the cytoplasm. Functionally, exhibits a very high intrinsic GTPase hydrolysis rate. Involved in the addition of a carboxymethylaminomethyl (cmnm) group at the wobble position (U34) of certain tRNAs, forming tRNA-cmnm(5)s(2)U34. In Herminiimonas arsenicoxydans, this protein is tRNA modification GTPase MnmE.